Consider the following 234-residue polypeptide: Phosphoribosylaminoimidazole-succinocarboxamide synthase (234 aa).

It belongs to the SAICAR synthetase family.

The enzyme catalyses 5-amino-1-(5-phospho-D-ribosyl)imidazole-4-carboxylate + L-aspartate + ATP = (2S)-2-[5-amino-1-(5-phospho-beta-D-ribosyl)imidazole-4-carboxamido]succinate + ADP + phosphate + 2 H(+). It participates in purine metabolism; IMP biosynthesis via de novo pathway; 5-amino-1-(5-phospho-D-ribosyl)imidazole-4-carboxamide from 5-amino-1-(5-phospho-D-ribosyl)imidazole-4-carboxylate: step 1/2. This Staphylococcus aureus (strain MRSA252) protein is Phosphoribosylaminoimidazole-succinocarboxamide synthase.